The chain runs to 205 residues: Guanylate kinase (205 aa).

Residues 7–185 (GNIFIISAAS…AEGDLLHIVN (179 aa)) enclose the Guanylate kinase-like domain. 14–21 (AASGTGKT) is an ATP binding site.

The protein belongs to the guanylate kinase family.

It localises to the cytoplasm. It catalyses the reaction GMP + ATP = GDP + ADP. Essential for recycling GMP and indirectly, cGMP. The sequence is that of Guanylate kinase from Neisseria gonorrhoeae (strain ATCC 700825 / FA 1090).